The primary structure comprises 283 residues: PTS system mannose-specific EIID component (283 aa).

The residue at position 1 (M1) is an N-formylmethionine. Residues 1-14 (MVDTTQTTTEKKLT) lie on the Cytoplasmic side of the membrane. Residues 11-281 (KKLTQSDIRG…GIAGYACGLL (271 aa)) form the PTS EIID domain. An intramembrane segment occupies 15-52 (QSDIRGVFLRSNLFQGSWNFERMQALGFCFSMVPAIRR). Residues 53-59 (LYPENNE) lie on the Cytoplasmic side of the membrane. The stretch at 60–92 (ARKQAIRRHLEFFNTQPFVAAPILGVTLALEEQ) is an intramembrane region. Residues 93–100 (RANGAEID) are Cytoplasmic-facing. The segment at 101–140 (DGAINGIKVGLMGPLAGVGDPIFWGTVRPVFAALGAGIAM) is a transmembrane helix. Residues 141-144 (SGSL) are Periplasmic-facing. The hydrophobic stretch at 145 to 173 (LGPLLFFILFNLVRLATRYYGVAYGYSKG) threads the membrane. Residues 174–183 (IDIVKDMGGG) lie on the Cytoplasmic side of the membrane. Positions 184–209 (FLQKLTEGASILGLFVMGALVNKWTH) form a transmembrane segment. Over 210–241 (VNIPLVVSRITDQTGKEHVTTVQTILDQLMPG) the chain is Periplasmic. The hydrophobic stretch at 242-255 (LVPLLLTFACMWLL) threads the membrane. At 256–261 (RKKVNP) the chain is on the cytoplasmic side. At 262–280 (LWIIVGFFVIGIAGYACGL) the chain is embedded in the membrane. Residues 281 to 283 (LGL) are Periplasmic-facing.

In terms of assembly, homotrimer of protomers that are composed of two subunits, IIC and IID.

It localises to the cell inner membrane. The phosphoenolpyruvate-dependent sugar phosphotransferase system (sugar PTS), a major carbohydrate active transport system, catalyzes the phosphorylation of incoming sugar substrates concomitantly with their translocation across the cell membrane. The enzyme II ManXYZ PTS system is involved in mannose transport. This Escherichia coli O157:H7 protein is PTS system mannose-specific EIID component (manZ).